The chain runs to 279 residues: Peptide deformylase 1B, chloroplastic (279 aa).

Positions 177 and 219 each coordinate Fe cation. Residue Glu-220 is part of the active site. His-223 provides a ligand contact to Fe cation.

It belongs to the polypeptide deformylase family. Fe(2+) is required as a cofactor.

It is found in the plastid. The protein resides in the chloroplast. The enzyme catalyses N-terminal N-formyl-L-methionyl-[peptide] + H2O = N-terminal L-methionyl-[peptide] + formate. Functionally, removes the formyl group from the N-terminal Met of newly synthesized proteins. The chain is Peptide deformylase 1B, chloroplastic (PDF1B) from Solanum lycopersicum (Tomato).